Consider the following 229-residue polypeptide: Uracil-DNA glycosylase (229 aa).

Aspartate 64 (proton acceptor) is an active-site residue.

This sequence belongs to the uracil-DNA glycosylase (UDG) superfamily. UNG family.

Its subcellular location is the cytoplasm. The catalysed reaction is Hydrolyzes single-stranded DNA or mismatched double-stranded DNA and polynucleotides, releasing free uracil.. Functionally, excises uracil residues from the DNA which can arise as a result of misincorporation of dUMP residues by DNA polymerase or due to deamination of cytosine. In Escherichia coli O45:K1 (strain S88 / ExPEC), this protein is Uracil-DNA glycosylase.